We begin with the raw amino-acid sequence, 866 residues long: Fibrinogen alpha chain (866 aa).

The N-terminal stretch at 1-19 (MFSMRIVCLVLSVVGTAWT) is a signal peptide. Position 22 is a phosphoserine (S22). Residues 36–38 (GPR) form an alpha-chain polymerization, binding distal domain of another fibrin gamma chain region. S45 is modified (phosphoserine; by FAM20C). At S50 the chain carries Phosphoserine. At S56 the chain carries Phosphoserine; by FAM20C. The stretch at 68–631 (CRMKGLIDEV…GHAKSRPVRD (564 aa)) forms a coiled coil. The interval 262-460 (ERPGGNEITR…SGSTTTTRRS (199 aa)) is disordered. Residues 270–299 (TRGGSTSYGTGSETESPRNPSSAGSWNSGS) are compositionally biased toward low complexity. S281, S291, and S294 each carry phosphoserine. T320 carries O-linked (GalNAc...) threonine glycosylation. K322 is covalently cross-linked (Isoglutamyl lysine isopeptide (Lys-Gln) (interchain with Q-41 in alpha-2-antiplasmin)). Q347 is covalently cross-linked (Isoglutamyl lysine isopeptide (Gln-Lys) (interchain with K-?)). The O-linked (GalNAc...) serine glycan is linked to S351. The segment covering 354–391 (PGSTGTWNPGSSERGSAGHWTSESSVSGSTGQWHSESG) has biased composition (polar residues). A Phosphoserine; by FAM20C modification is found at S364. Q385 is covalently cross-linked (Isoglutamyl lysine isopeptide (Gln-Lys) (interchain with K-?)). T412 carries the phosphothreonine modification. Residues 424–449 (TRREYHTEKLVTSKGDKELRTGKEKV) show a composition bias toward basic and acidic residues. Low complexity predominate over residues 450–460 (TSGSTTTTRRS). Phosphoserine is present on S451. N-linked (GlcNAc...) asparagine; in variant Caracas-2 glycosylation is present at S453. Residues C461 and C491 are joined by a disulfide bond. S501 carries the post-translational modification Phosphoserine. Position 505 is a phosphothreonine (T505). The residue at position 524 (S524) is a Phosphoserine; by FAM20C. Isoglutamyl lysine isopeptide (Lys-Gln) (interchain with Q-?) cross-links involve residues K527 and K558. Positions 543–638 (ETESRGSESG…VRDCDDVLQT (96 aa)) are disordered. Phosphoserine; by FAM20C is present on S560. P565 is modified (4-hydroxyproline; by P4HA1). Isoglutamyl lysine isopeptide (Lys-Gln) (interchain with Q-?) cross-links involve residues K575, K581, and K599. A compositionally biased stretch (low complexity) spans 575-589 (KSSSYSKQFTSSTSY). Basic and acidic residues predominate over residues 594–617 (STFESKSYKMADEAGSEADHEGTH). S609 carries the post-translational modification Phosphoserine; by FAM20C. Positions 618–627 (STKRGHAKSR) are enriched in basic residues. The Fibrinogen C-terminal domain maps to 623–864 (HAKSRPVRDC…AVRMKIRPLV (242 aa)). N686 carries an N-linked (GlcNAc...) asparagine glycan. Ca(2+) is bound by residues D791, D793, W795, and E797. A disulfide bond links C799 and C812.

As to quaternary structure, heterohexamer; disulfide linked. Contains 2 sets of 3 non-identical chains (alpha, beta and gamma). The 2 heterotrimers are in head to head conformation with the N-termini in a small central domain. (Microbial infection) Interacts with Staphylococcus aureus protein Fib; this interaction inhibits fibrinogen-dependent platelet aggregation and protects the bacteria form phagocytosis. Post-translationally, the alpha chain is normally not N-glycosylated, even though glycosylation at Asn-686 was observed when a fragment of the protein was expressed in insect cells. It is well known that heterologous expression of isolated domains can lead to adventitious protein modifications. Besides, glycosylation at Asn-686 is supported by large-scale glycoproteomics studies, but the evidence is still quite tenuous. Most likely, Asn-686 is not glycosylated in the healthy human body, or only with low efficiency. O-glycosylated. In terms of processing, forms F13A-mediated cross-links between a glutamine and the epsilon-amino group of a lysine residue, forming fibronectin-fibrinogen heteropolymers. Post-translationally, about one-third of the alpha chains in the molecules in blood were found to be phosphorylated. Conversion of fibrinogen to fibrin is triggered by thrombin, which cleaves fibrinopeptides A and B from alpha and beta chains, and thus exposes the N-terminal polymerization sites responsible for the formation of the soft clot. The soft clot is converted into the hard clot by factor XIIIA which catalyzes the epsilon-(gamma-glutamyl)lysine cross-linking between gamma chains (stronger) and between alpha chains (weaker) of different monomers. In terms of processing, phosphorylated by FAM20C in the extracellular medium. Detected in blood plasma (at protein level).

It is found in the secreted. Functionally, cleaved by the protease thrombin to yield monomers which, together with fibrinogen beta (FGB) and fibrinogen gamma (FGG), polymerize to form an insoluble fibrin matrix. Fibrin has a major function in hemostasis as one of the primary components of blood clots. In addition, functions during the early stages of wound repair to stabilize the lesion and guide cell migration during re-epithelialization. Was originally thought to be essential for platelet aggregation, based on in vitro studies using anticoagulated blood. However, subsequent studies have shown that it is not absolutely required for thrombus formation in vivo. Enhances expression of SELP in activated platelets via an ITGB3-dependent pathway. Maternal fibrinogen is essential for successful pregnancy. Fibrin deposition is also associated with infection, where it protects against IFNG-mediated hemorrhage. May also facilitate the immune response via both innate and T-cell mediated pathways. In Homo sapiens (Human), this protein is Fibrinogen alpha chain (FGA).